A 612-amino-acid chain; its full sequence is DNA mismatch repair protein MutL (612 aa).

It belongs to the DNA mismatch repair MutL/HexB family.

Its function is as follows. This protein is involved in the repair of mismatches in DNA. It is required for dam-dependent methyl-directed DNA mismatch repair. May act as a 'molecular matchmaker', a protein that promotes the formation of a stable complex between two or more DNA-binding proteins in an ATP-dependent manner without itself being part of a final effector complex. This is DNA mismatch repair protein MutL from Bartonella quintana (strain Toulouse) (Rochalimaea quintana).